Reading from the N-terminus, the 434-residue chain is (3,5-dihydroxyphenyl)acetyl-CoA 1,2-dioxygenase (434 aa).

Substrate contacts are provided by residues D184, E190, 223–226, 234–239, G293, 322–324, and Q413; these read HPRY, AGINLK, and IPG.

The protein belongs to the enoyl-CoA hydratase/isomerase family. As to quaternary structure, homohexamer; dimer of trimers.

It catalyses the reaction (3,5-dihydroxyphenyl)acetyl-CoA + O2 = 2-(3,5-dihydroxyphenyl)-2-oxoacetate + CoA + H(+). Involved in the biosynthesis of the nonproteinogenic amino acid monomer (S)-3,5-dihydroxyphenylglycine (Dpg) responsible of the production of vancomycin and teicoplanin antibiotics. Catalyzes the unusual conversion 3,5-dihydroxyphenylacetyl-CoA (DPA-CoA) to 3,5-dihydroxyphenylglyoxylate. DpgC performed a net four-electron oxidation of the benzylic carbon of DPA-CoA and the hydrolysis of the thioester bond to generate free CoA. It can also use phenylacetyl-CoA (PA-CoA) as substrate. The chain is (3,5-dihydroxyphenyl)acetyl-CoA 1,2-dioxygenase (dpgC) from Amycolatopsis orientalis (Nocardia orientalis).